The sequence spans 473 residues: Zinc finger and SCAN domain-containing protein 21 (473 aa).

A Glycyl lysine isopeptide (Lys-Gly) (interchain with G-Cter in SUMO2) cross-link involves residue Lys27. The SCAN box domain occupies 45–127 (RQRFRQFGYH…TLLEDLEREL (83 aa)). A disordered region spans residues 127-167 (LDEPGHQVSTPPNEQKPVWEKISSSGTAKESPSSMQPQPLE). Over residues 148–165 (ISSSGTAKESPSSMQPQP) the composition is skewed to polar residues. Residues Lys221 and Lys232 each participate in a glycyl lysine isopeptide (Lys-Gly) (interchain with G-Cter in SUMO2) cross-link. Residues 244–272 (LENEKGTKPPLQEAGSKKGRESVPTKPTP) form a disordered region. Basic and acidic residues predominate over residues 258–272 (GSKKGRESVPTKPTP). C2H2-type zinc fingers lie at residues 277–299 (YICAECGKAFSNSSNLTKHRRTH), 305–327 (YVCTKCGKAFSHSSNLTLHYRTH), 333–354 (YDCKCGKAFGQSSDLLKHQRMH), 360–382 (YQCKDCGKAFSGKGSLIRHYRIH), 388–410 (YQCNECGKSFSQHAGLSSHQRLH), 416–438 (YKCKECGKAFNHSSNFNKHHRIH), and 444–466 (YWCHHCGKTFCSKSNLSKHQRVH). Lys349 is covalently cross-linked (Glycyl lysine isopeptide (Lys-Gly) (interchain with G-Cter in SUMO2)).

This sequence belongs to the krueppel C2H2-type zinc-finger protein family.

It is found in the nucleus. Strong transcriptional activator. Plays an important role in spermatogenesis; essential for the progression of meiotic prophase I in spermatocytes. The protein is Zinc finger and SCAN domain-containing protein 21 (ZSCAN21) of Pan troglodytes (Chimpanzee).